Here is an 843-residue protein sequence, read N- to C-terminus: Aconitase AMT8-2 (843 aa).

258-260 (DSH) is a binding site for substrate. [4Fe-4S] cluster is bound by residues cysteine 450, cysteine 513, and cysteine 516. Substrate is bound by residues arginine 536, arginine 541, and 712 to 713 (SR).

Belongs to the aconitase/IPM isomerase family.

It functions in the pathway mycotoxin biosynthesis. In terms of biological role, aconitase; part of the gene clusters that mediate the biosynthesis of AM-toxins, host-selective toxins (HSTs) causing Alternaria blotch on apple, a worldwide distributed disease. AM-toxins are cyclic depsipeptides containing the 3 residues 2-hydroxy-isovaleric acid (2-HIV), dehydroalanine, L-alanine which are common for all 3 AM-toxins I to III. The fourth precursor is L-alpha-amino-methoxyphenyl-valeric acid (L-Amv) for AM-toxin I, L-alpha-amino-phenyl-valeric acid (L-Apv) for AM-toxin II, and L-alpha-amino-hydroxyphenyl-valeric acid (L-Ahv) for AM-toxin III. AM-toxins have two target sites for affecting susceptible apple cells; they cause invagination of the plasma membrane and electrolyte loss and chloroplast disorganization. The non-ribosomal peptide synthetase AMT1 contains 4 catalytic modules and is responsible for activation of each residue in AM-toxin. The aldo-keto reductase AMT2 catalyzes the conversion of 2-keto-isovaleric acid (2-KIV) to 2-hydroxy-isovaleric acid (2-HIV), one of the precursor residues incorporated by AMT1 during AM-toxin biosynthesis, by reduction of its ketone to an alcohol. The cytochrome P450 monooxygenase AMT3 and the thioesterase AMT4 are also important for AM-toxin production, but their exact function within the AM-toxin biosynthesis are not known yet. Up to 21 proteins (including AMT1 to AMT4) are predicted to be involved in AM-toxin biosynthesis since their expression ishighly up-regulated in AM-toxin-producing cultures. The sequence is that of Aconitase AMT8-2 from Alternaria alternata (Alternaria rot fungus).